The following is a 207-amino-acid chain: dITP/XTP pyrophosphatase (207 aa).

Substrate is bound at residue 8-13 (TNNKNK). Aspartate 72 functions as the Proton acceptor in the catalytic mechanism. Aspartate 72 provides a ligand contact to Mg(2+). Substrate-binding positions include serine 73, 157-160 (FGYD), lysine 180, and 185-186 (HR).

Belongs to the HAM1 NTPase family. Homodimer. The cofactor is Mg(2+).

The enzyme catalyses XTP + H2O = XMP + diphosphate + H(+). It carries out the reaction dITP + H2O = dIMP + diphosphate + H(+). The catalysed reaction is ITP + H2O = IMP + diphosphate + H(+). Functionally, pyrophosphatase that catalyzes the hydrolysis of nucleoside triphosphates to their monophosphate derivatives, with a high preference for the non-canonical purine nucleotides XTP (xanthosine triphosphate), dITP (deoxyinosine triphosphate) and ITP. Seems to function as a house-cleaning enzyme that removes non-canonical purine nucleotides from the nucleotide pool, thus preventing their incorporation into DNA/RNA and avoiding chromosomal lesions. This is dITP/XTP pyrophosphatase from Lactobacillus johnsonii (strain CNCM I-12250 / La1 / NCC 533).